Here is a 275-residue protein sequence, read N- to C-terminus: MEVEGLELDTAELGPLEGSHQKLEAEEEQEESEDAAGGSKKRVVPGIVYLGHIPPRFRPLHVRNLLSAYGEVGRVFFQAEDGFVKRKKKAAAASAAGGKKRSKYSKDYTEGWVEFRDKRVAKRVAVSLHNTPMGSRRRSPFRYDLWNLKYLHRFTWSHLSEHLAFERQVRRQRLRAEVAQAKRETDFYLRSVERGQRFLAADGDSTRPNGSWAFAQRPTEQEMRARKAARPGGRERARLANAQDQARSNRGLLAKIFGAPTPSESRGNSSPARNS.

Methionine 1 is subject to N-acetylmethionine. Composition is skewed to acidic residues over residues 1–10 (MEVEGLELDT) and 25–34 (AEEEQEESED). A disordered region spans residues 1 to 39 (MEVEGLELDTAELGPLEGSHQKLEAEEEQEESEDAAGGS). An RRM domain is found at 46–145 (GIVYLGHIPP…RRRSPFRYDL (100 aa)). Residues 164 to 194 (AFERQVRRQRLRAEVAQAKRETDFYLRSVER) adopt a coiled-coil conformation. The interval 200-275 (AADGDSTRPN…RGNSSPARNS (76 aa)) is disordered. Positions 262–275 (PSESRGNSSPARNS) are enriched in polar residues.

It belongs to the ESF2/ABP1 family. Interacts with ESF1/ABTAP. Interacts with IGHMBP2.

Its subcellular location is the nucleus. The protein localises to the nucleolus. Its function is as follows. Could be a novel TATA-binding protein (TBP) which can function as a basal transcription activator. Can act as a regulator of basal transcription for class II genes. This chain is Activator of basal transcription 1 (ABT1), found in Bos taurus (Bovine).